We begin with the raw amino-acid sequence, 295 residues long: Taste receptor type 2 member 120 (295 aa).

At 1–5 the chain is on the extracellular side; it reads MDLTE. Residues 6 to 26 form a helical membrane-spanning segment; that stretch reads WIVTIIMMIEFLLGNCANFFI. Over 27-45 the chain is Cytoplasmic; that stretch reads MVVNAIDCMKRRKISSADR. A helical transmembrane segment spans residues 46 to 66; sequence IITALAISRIGLLWAMLMNWH. Residues 67–83 are Extracellular-facing; the sequence is SRVYTTDTYSFQVTAFS. A helical transmembrane segment spans residues 84 to 104; it reads GIIWAITNHFTTWLGTILSMF. The Cytoplasmic portion of the chain corresponds to 105-125; it reads YLFKIANFSNCLFLHLKRKLD. The chain crosses the membrane as a helical span at residues 126-146; the sequence is SVLLVIFLVSSLLVFAYLGVV. Over 147–177 the chain is Extracellular; it reads NIKKIAWLSVHEGNVTVKSKLMNIASIRDTL. N-linked (GlcNAc...) asparagine glycosylation occurs at Asn-160. The chain crosses the membrane as a helical span at residues 178–198; sequence LFSLINIAPFGISLTCVLLLI. Over 199-230 the chain is Cytoplasmic; it reads YSLGKHLKNMKFYGKGCQDQSTMVHIRALQTV. Residues 231–251 traverse the membrane as a helical segment; sequence VSFLLLYATYSSCVIISGWSI. The Extracellular segment spans residues 252-255; the sequence is QNVP. A helical membrane pass occupies residues 256-276; the sequence is IFLFCVTIGAFYPAGHSCILI. The Cytoplasmic portion of the chain corresponds to 277-295; it reads WGNQKLKQFLLLFLRQMKC.

Belongs to the G-protein coupled receptor T2R family.

It is found in the membrane. Functionally, putative taste receptor which may play a role in the perception of bitterness. This Rattus norvegicus (Rat) protein is Taste receptor type 2 member 120.